Reading from the N-terminus, the 464-residue chain is tRNA-2-methylthio-N(6)-dimethylallyladenosine synthase (464 aa).

One can recognise an MTTase N-terminal domain in the interval 19-135 (GSYWITTFGC…LENLLGKVDL (117 aa)). [4Fe-4S] cluster-binding residues include cysteine 28, cysteine 64, cysteine 98, cysteine 170, cysteine 174, and cysteine 177. A Radical SAM core domain is found at 156–394 (RESSICGWVN…DLVEKTARSR (239 aa)). One can recognise a TRAM domain in the interval 396 to 464 (QRYIDNIESV…PFSLTGELSL (69 aa)).

This sequence belongs to the methylthiotransferase family. MiaB subfamily. In terms of assembly, monomer. [4Fe-4S] cluster serves as cofactor.

The protein localises to the cytoplasm. It catalyses the reaction N(6)-dimethylallyladenosine(37) in tRNA + (sulfur carrier)-SH + AH2 + 2 S-adenosyl-L-methionine = 2-methylsulfanyl-N(6)-dimethylallyladenosine(37) in tRNA + (sulfur carrier)-H + 5'-deoxyadenosine + L-methionine + A + S-adenosyl-L-homocysteine + 2 H(+). Functionally, catalyzes the methylthiolation of N6-(dimethylallyl)adenosine (i(6)A), leading to the formation of 2-methylthio-N6-(dimethylallyl)adenosine (ms(2)i(6)A) at position 37 in tRNAs that read codons beginning with uridine. The sequence is that of tRNA-2-methylthio-N(6)-dimethylallyladenosine synthase from Prochlorococcus marinus (strain MIT 9301).